Here is a 301-residue protein sequence, read N- to C-terminus: Transcription elongation factor A protein 1 (301 aa).

Position 1 is an N-acetylmethionine (methionine 1). The region spanning 3–80 (DEVIRIAKKM…KSWKKLLDGP (78 aa)) is the TFIIS N-terminal domain. Residue lysine 55 forms a Glycyl lysine isopeptide (Lys-Gly) (interchain with G-Cter in ubiquitin) linkage. A phosphoserine mark is found at serine 57, serine 81, serine 97, and serine 100. Basic and acidic residues predominate over residues 76–93 (LLDGPSTDKDSEEKKKDT). Residues 76–139 (LLDGPSTDKD…FPRAPSTSDS (64 aa)) form a disordered region. Residues 140–256 (VRLKCREMLA…EHQMAKTGGT (117 aa)) enclose the TFIIS central domain. The TFIIS-type zinc-finger motif lies at 259–299 (DLFTCGKCKKKNCTYTQVQTRSADEPMTTFVVCNECGNRWK). Cysteine 263, cysteine 266, cysteine 291, and cysteine 294 together coordinate Zn(2+).

The protein belongs to the TFS-II family. As to quaternary structure, interacts with EAF2. Associates with UBR5 and forms a transcription regulatory complex made of CDK9, Pol II, UBR5 and TCEA1/TFIIS. Part of TBP-based Pol II pre-initiation complex (PIC), in which Pol II core assembles with general transcription factors and other specific initiation factors including GTF2E1, GTF2E2, GTF2F1, GTF2F2, TCEA1, ERCC2, ERCC3, GTF2H2, GTF2H3, GTF2H4, GTF2H5, GTF2A1, GTF2A2, GTF2B and TBP; this large multi-subunit PIC complex mediates DNA unwinding and targets Pol II core to the transcription start site where the first phosphodiester bond forms.

It localises to the nucleus. Necessary for efficient RNA polymerase II transcription elongation past template-encoded arresting sites. The arresting sites in DNA have the property of trapping a certain fraction of elongating RNA polymerases that pass through, resulting in locked ternary complexes. Cleavage of the nascent transcript by S-II allows the resumption of elongation from the new 3'-terminus. The polypeptide is Transcription elongation factor A protein 1 (TCEA1) (Bos taurus (Bovine)).